The sequence spans 255 residues: Aliphatic sulfonates import ATP-binding protein SsuB (255 aa).

One can recognise an ABC transporter domain in the interval 12–233 (LLLNAVSKHY…RLGSVRLAEL (222 aa)). Residue 44-51 (GRSGGGKS) coordinates ATP.

It belongs to the ABC transporter superfamily. Aliphatic sulfonates importer (TC 3.A.1.17.2) family. As to quaternary structure, the complex is composed of two ATP-binding proteins (SsuB), two transmembrane proteins (SsuC) and a solute-binding protein (SsuA).

The protein resides in the cell inner membrane. The enzyme catalyses ATP + H2O + aliphatic sulfonate-[sulfonate-binding protein]Side 1 = ADP + phosphate + aliphatic sulfonateSide 2 + [sulfonate-binding protein]Side 1.. Its function is as follows. Part of the ABC transporter complex SsuABC involved in aliphatic sulfonates import. Responsible for energy coupling to the transport system. The sequence is that of Aliphatic sulfonates import ATP-binding protein SsuB from Escherichia coli O6:H1 (strain CFT073 / ATCC 700928 / UPEC).